We begin with the raw amino-acid sequence, 323 residues long: Beta-ketoacyl-[acyl-carrier-protein] synthase III 1 (323 aa).

Catalysis depends on residues cysteine 114 and histidine 254. Residues 255 to 259 (QANLR) form an ACP-binding region. Asparagine 284 is a catalytic residue.

Belongs to the thiolase-like superfamily. FabH family. As to quaternary structure, homodimer.

It is found in the cytoplasm. The catalysed reaction is malonyl-[ACP] + acetyl-CoA + H(+) = 3-oxobutanoyl-[ACP] + CO2 + CoA. It functions in the pathway lipid metabolism; fatty acid biosynthesis. In terms of biological role, catalyzes the condensation reaction of fatty acid synthesis by the addition to an acyl acceptor of two carbons from malonyl-ACP. Catalyzes the first condensation reaction which initiates fatty acid synthesis and may therefore play a role in governing the total rate of fatty acid production. Possesses both acetoacetyl-ACP synthase and acetyl transacylase activities. Its substrate specificity determines the biosynthesis of branched-chain and/or straight-chain of fatty acids. The polypeptide is Beta-ketoacyl-[acyl-carrier-protein] synthase III 1 (Lactiplantibacillus plantarum (strain ATCC BAA-793 / NCIMB 8826 / WCFS1) (Lactobacillus plantarum)).